A 338-amino-acid chain; its full sequence is Lipoate-protein ligase A (338 aa).

Positions 29–216 (PATQRVLFLW…AFFAHYGERI (188 aa)) constitute a BPL/LPL catalytic domain. ATP-binding positions include Arg71, 76-79 (GAVF), and Lys134. Lys134 is a binding site for (R)-lipoate.

It belongs to the LplA family. Monomer.

It is found in the cytoplasm. It carries out the reaction L-lysyl-[lipoyl-carrier protein] + (R)-lipoate + ATP = N(6)-[(R)-lipoyl]-L-lysyl-[lipoyl-carrier protein] + AMP + diphosphate + H(+). The protein operates within protein modification; protein lipoylation via exogenous pathway; protein N(6)-(lipoyl)lysine from lipoate: step 1/2. It functions in the pathway protein modification; protein lipoylation via exogenous pathway; protein N(6)-(lipoyl)lysine from lipoate: step 2/2. Functionally, catalyzes both the ATP-dependent activation of exogenously supplied lipoate to lipoyl-AMP and the transfer of the activated lipoyl onto the lipoyl domains of lipoate-dependent enzymes. In Salmonella typhi, this protein is Lipoate-protein ligase A.